The following is a 360-amino-acid chain: Protein Wnt-2 (360 aa).

Positions 1-25 (MNAPLGGIWLWLPLLLTWLTPEVSS) are cleaved as a signal peptide. Intrachain disulfides connect Cys76–Cys87, Cys127–Cys135, Cys137–Cys157, Cys206–Cys220, Cys208–Cys215, Cys278–Cys309, Cys294–Cys304, Cys308–Cys348, Cys324–Cys339, Cys326–Cys336, and Cys331–Cys332. Residue Ser212 is the site of O-palmitoleoyl serine; by PORCN attachment. Asn295 carries an N-linked (GlcNAc...) asparagine glycan.

The protein belongs to the Wnt family. Palmitoleoylation is required for efficient binding to frizzled receptors. Depalmitoleoylation leads to Wnt signaling pathway inhibition.

The protein localises to the secreted. It is found in the extracellular space. Its subcellular location is the extracellular matrix. Functionally, ligand for members of the frizzled family of seven transmembrane receptors. Functions in the canonical Wnt signaling pathway that results in activation of transcription factors of the TCF/LEF family. Functions as a upstream regulator of FGF10 expression. Plays an important role in embryonic lung development. May contribute to embryonic brain development by regulating the proliferation of dopaminergic precursors and neurons. In Equus caballus (Horse), this protein is Protein Wnt-2 (WNT2).